Here is a 110-residue protein sequence, read N- to C-terminus: Large ribosomal subunit protein P2B (110 aa).

Over residues 73–88 (TPAAGGAAGAEATSAA) the composition is skewed to low complexity. Residues 73-110 (TPAAGGAAGAEATSAAEEAKEEEAAEESDEDMGFGLFD) form a disordered region. Positions 91 to 104 (AKEEEAAEESDEDM) are enriched in acidic residues. Position 100 is a phosphoserine (serine 100).

This sequence belongs to the eukaryotic ribosomal protein P1/P2 family. In terms of assembly, component of the large ribosomal subunit (LSU). Mature yeast ribosomes consist of a small (40S) and a large (60S) subunit. The 40S small subunit contains 1 molecule of ribosomal RNA (18S rRNA) and at least 33 different proteins. The large 60S subunit contains 3 rRNA molecules (25S, 5.8S and 5S rRNA) and at least 46 different proteins. The acidic ribosomal P-proteins form the stalk structure of the 60S subunit. They are organized as a pentameric complex in which uL10/P0 interacts with 2 heterodimers of P1 and P2 proteins.

Its subcellular location is the cytoplasm. In terms of biological role, component of the ribosome, a large ribonucleoprotein complex responsible for the synthesis of proteins in the cell. The small ribosomal subunit (SSU) binds messenger RNAs (mRNAs) and translates the encoded message by selecting cognate aminoacyl-transfer RNA (tRNA) molecules. The large subunit (LSU) contains the ribosomal catalytic site termed the peptidyl transferase center (PTC), which catalyzes the formation of peptide bonds, thereby polymerizing the amino acids delivered by tRNAs into a polypeptide chain. The nascent polypeptides leave the ribosome through a tunnel in the LSU and interact with protein factors that function in enzymatic processing, targeting, and the membrane insertion of nascent chains at the exit of the ribosomal tunnel. This Schizosaccharomyces pombe (strain 972 / ATCC 24843) (Fission yeast) protein is Large ribosomal subunit protein P2B (rpp202).